The sequence spans 563 residues: Arginine--tRNA ligase (563 aa).

The short motif at 121 to 131 is the 'HIGH' region element; sequence PNIAKPFSIGH.

It belongs to the class-I aminoacyl-tRNA synthetase family. As to quaternary structure, monomer.

Its subcellular location is the cytoplasm. It carries out the reaction tRNA(Arg) + L-arginine + ATP = L-arginyl-tRNA(Arg) + AMP + diphosphate. This chain is Arginine--tRNA ligase, found in Streptococcus pyogenes serotype M49 (strain NZ131).